We begin with the raw amino-acid sequence, 390 residues long: MSIRRVMHVDLDAFFVSVEQAVRPEFKDKPVIVGGKPERRGVVAAASYEARKFGIHSGMPLITAKHLCPQAIFIEGNHQLYREYSEKFMLILSDFSPFLEPMGLDEAYLEVTGFESLHGSIAQMASKIRRRITAELGINASIGIANSKVAAKIATEQAKPNGQCEVPAGEEASFLAPLDIAVMPGIGKKTEQHLKSLGIDTLGKLAALPASFLKSCLGTYAPYLSNAAMGIDNRPVEMPSEAKSISRETTFETDTRNQTFLEAKLSYLSEKITATLRKRGKQTRVVQIKIRFADFTTLTRQKHLGQPASGNREIFQTALSLMNGILDSDRQAVRLLGVGISDFCGPEKQLEIDPAKARLEKLDASLDKIRQKYGFSSVQTGRTYRLKDMF.

Positions 6–187 constitute a UmuC domain; the sequence is VMHVDLDAFF…LDIAVMPGIG (182 aa). The Mg(2+) site is built by Asp-10 and Asp-105. Glu-106 is an active-site residue.

It belongs to the DNA polymerase type-Y family. In terms of assembly, monomer. The cofactor is Mg(2+).

It localises to the cytoplasm. It carries out the reaction DNA(n) + a 2'-deoxyribonucleoside 5'-triphosphate = DNA(n+1) + diphosphate. Poorly processive, error-prone DNA polymerase involved in untargeted mutagenesis. Copies undamaged DNA at stalled replication forks, which arise in vivo from mismatched or misaligned primer ends. These misaligned primers can be extended by PolIV. Exhibits no 3'-5' exonuclease (proofreading) activity. May be involved in translesional synthesis, in conjunction with the beta clamp from PolIII. This chain is DNA polymerase IV, found in Dehalococcoides mccartyi (strain ATCC BAA-2100 / JCM 16839 / KCTC 5957 / BAV1).